The sequence spans 295 residues: Acetylglutamate kinase (295 aa).

Substrate is bound by residues 66–67 (GG), arginine 88, and asparagine 193.

This sequence belongs to the acetylglutamate kinase family. ArgB subfamily.

Its subcellular location is the cytoplasm. It catalyses the reaction N-acetyl-L-glutamate + ATP = N-acetyl-L-glutamyl 5-phosphate + ADP. It functions in the pathway amino-acid biosynthesis; L-arginine biosynthesis; N(2)-acetyl-L-ornithine from L-glutamate: step 2/4. Functionally, catalyzes the ATP-dependent phosphorylation of N-acetyl-L-glutamate. The protein is Acetylglutamate kinase of Sinorhizobium medicae (strain WSM419) (Ensifer medicae).